We begin with the raw amino-acid sequence, 801 residues long: DNA mismatch repair protein MutS (801 aa).

590–597 (GPNMSGKS) serves as a coordination point for ATP.

The protein belongs to the DNA mismatch repair MutS family.

In terms of biological role, this protein is involved in the repair of mismatches in DNA. It is possible that it carries out the mismatch recognition step. This protein has a weak ATPase activity. This chain is DNA mismatch repair protein MutS, found in Thermotoga neapolitana (strain ATCC 49049 / DSM 4359 / NBRC 107923 / NS-E).